The following is a 104-amino-acid chain: Disrupted in renal carcinoma protein 1 (104 aa).

The disordered stretch occupies residues 1–23 (MPEAHMQPAKLQTSLPTTDHGSK). The span at 10–19 (KLQTSLPTTD) shows a compositional bias: polar residues.

Expressed at low steady-state level in adult placenta, testis, ovary, prostate, fetal kidney, spleen and skeletal muscle.

In Homo sapiens (Human), this protein is Disrupted in renal carcinoma protein 1 (DIRC1).